Reading from the N-terminus, the 372-residue chain is 4-hydroxy-3-methylbut-2-en-1-yl diphosphate synthase (flavodoxin) (372 aa).

4 residues coordinate [4Fe-4S] cluster: Cys-270, Cys-273, Cys-305, and Glu-312.

This sequence belongs to the IspG family. [4Fe-4S] cluster is required as a cofactor.

The enzyme catalyses (2E)-4-hydroxy-3-methylbut-2-enyl diphosphate + oxidized [flavodoxin] + H2O + 2 H(+) = 2-C-methyl-D-erythritol 2,4-cyclic diphosphate + reduced [flavodoxin]. It functions in the pathway isoprenoid biosynthesis; isopentenyl diphosphate biosynthesis via DXP pathway; isopentenyl diphosphate from 1-deoxy-D-xylulose 5-phosphate: step 5/6. Functionally, converts 2C-methyl-D-erythritol 2,4-cyclodiphosphate (ME-2,4cPP) into 1-hydroxy-2-methyl-2-(E)-butenyl 4-diphosphate. The polypeptide is 4-hydroxy-3-methylbut-2-en-1-yl diphosphate synthase (flavodoxin) (Vibrio parahaemolyticus serotype O3:K6 (strain RIMD 2210633)).